Consider the following 416-residue polypeptide: Lipoyl synthase, mitochondrial (416 aa).

Residues 1–33 (MAAASTNRLRLLYTSTRASLPQSTPSILTTRTY) constitute a mitochondrion transit peptide. The tract at residues 20-52 (LPQSTPSILTTRTYATTDSSTSATSTPKPRRRT) is disordered. A compositionally biased stretch (low complexity) spans 29 to 46 (TTRTYATTDSSTSATSTP). Cys-133, Cys-138, Cys-144, Cys-164, Cys-168, Cys-171, and Ser-379 together coordinate [4Fe-4S] cluster. The region spanning 147 to 368 (GGDKAAATAT…QRRAEELGFL (222 aa)) is the Radical SAM core domain.

This sequence belongs to the radical SAM superfamily. Lipoyl synthase family. It depends on [4Fe-4S] cluster as a cofactor.

Its subcellular location is the mitochondrion. The enzyme catalyses [[Fe-S] cluster scaffold protein carrying a second [4Fe-4S](2+) cluster] + N(6)-octanoyl-L-lysyl-[protein] + 2 oxidized [2Fe-2S]-[ferredoxin] + 2 S-adenosyl-L-methionine + 4 H(+) = [[Fe-S] cluster scaffold protein] + N(6)-[(R)-dihydrolipoyl]-L-lysyl-[protein] + 4 Fe(3+) + 2 hydrogen sulfide + 2 5'-deoxyadenosine + 2 L-methionine + 2 reduced [2Fe-2S]-[ferredoxin]. It participates in protein modification; protein lipoylation via endogenous pathway; protein N(6)-(lipoyl)lysine from octanoyl-[acyl-carrier-protein]: step 2/2. Functionally, catalyzes the radical-mediated insertion of two sulfur atoms into the C-6 and C-8 positions of the octanoyl moiety bound to the lipoyl domains of lipoate-dependent enzymes, thereby converting the octanoylated domains into lipoylated derivatives. In Aspergillus niger (strain ATCC MYA-4892 / CBS 513.88 / FGSC A1513), this protein is Lipoyl synthase, mitochondrial.